The chain runs to 112 residues: Histone H2A, sperm (112 aa).

An N5-methylglutamine modification is found at Q91. A Glycyl lysine isopeptide (Lys-Gly) (interchain with G-Cter in ubiquitin) cross-link involves residue K106.

It belongs to the histone H2A family. The nucleosome is a histone octamer containing two molecules each of H2A, H2B, H3 and H4 assembled in one H3-H4 heterotetramer and two H2A-H2B heterodimers. The octamer wraps approximately 147 bp of DNA. In terms of processing, monoubiquitination gives a specific tag for epigenetic transcriptional repression.

Its subcellular location is the nucleus. The protein resides in the chromosome. In terms of biological role, core component of nucleosome. Nucleosomes wrap and compact DNA into chromatin, limiting DNA accessibility to the cellular machineries which require DNA as a template. Histones thereby play a central role in transcription regulation, DNA repair, DNA replication and chromosomal stability. DNA accessibility is regulated via a complex set of post-translational modifications of histones, also called histone code, and nucleosome remodeling. This chain is Histone H2A, sperm, found in Lytechinus pictus (Painted sea urchin).